Consider the following 319-residue polypeptide: Cobalamin biosynthesis protein CobD (319 aa).

The next 5 helical transmembrane spans lie at Val-56 to Ala-76, Gly-78 to Gly-98, Val-153 to Ala-173, Val-204 to Cys-224, and Leu-296 to Val-316.

This sequence belongs to the CobD/CbiB family.

It localises to the cell membrane. It functions in the pathway cofactor biosynthesis; adenosylcobalamin biosynthesis. Functionally, converts cobyric acid to cobinamide by the addition of aminopropanol on the F carboxylic group. The polypeptide is Cobalamin biosynthesis protein CobD (Klebsiella pneumoniae subsp. pneumoniae (strain ATCC 700721 / MGH 78578)).